The sequence spans 192 residues: Ion-translocating oxidoreductase complex subunit B (192 aa).

Positions 1 to 26 are hydrophobic; the sequence is MNAIWIAVAAVSLLGLAFGAILGYAS. Residues 32-91 enclose the 4Fe-4S domain; it reads EDDPVVEKIDEILPQSQCGQCGYPGCRPYAEAISCNGEKINRCAPGGEAVMLKIAELLNV. Positions 49, 52, 57, 74, 117, 120, 123, 127, 147, 150, 153, and 157 each coordinate [4Fe-4S] cluster. 4Fe-4S ferredoxin-type domains follow at residues 108–137 and 138–167; these read MVAVIDENNCIGCTKCIQACPVDAIVGATR and AMHTVMSDLCTGCNLCVDPCPTHCISLQPV.

Belongs to the 4Fe4S bacterial-type ferredoxin family. RnfB subfamily. In terms of assembly, the complex is composed of six subunits: RsxA, RsxB, RsxC, RsxD, RsxE and RsxG. It depends on [4Fe-4S] cluster as a cofactor.

Its subcellular location is the cell inner membrane. Functionally, part of a membrane-bound complex that couples electron transfer with translocation of ions across the membrane. Required to maintain the reduced state of SoxR. This chain is Ion-translocating oxidoreductase complex subunit B, found in Escherichia coli O8 (strain IAI1).